The primary structure comprises 135 residues: Large ribosomal subunit protein bL19 (135 aa).

It belongs to the bacterial ribosomal protein bL19 family.

Its function is as follows. This protein is located at the 30S-50S ribosomal subunit interface and may play a role in the structure and function of the aminoacyl-tRNA binding site. The protein is Large ribosomal subunit protein bL19 of Xanthomonas axonopodis pv. citri (strain 306).